Consider the following 195-residue polypeptide: Probable nicotinate-nucleotide adenylyltransferase (195 aa).

Belongs to the NadD family.

The catalysed reaction is nicotinate beta-D-ribonucleotide + ATP + H(+) = deamido-NAD(+) + diphosphate. The protein operates within cofactor biosynthesis; NAD(+) biosynthesis; deamido-NAD(+) from nicotinate D-ribonucleotide: step 1/1. Catalyzes the reversible adenylation of nicotinate mononucleotide (NaMN) to nicotinic acid adenine dinucleotide (NaAD). In Mesorhizobium japonicum (strain LMG 29417 / CECT 9101 / MAFF 303099) (Mesorhizobium loti (strain MAFF 303099)), this protein is Probable nicotinate-nucleotide adenylyltransferase.